A 392-amino-acid polypeptide reads, in one-letter code: MSVSHSSRLNKGVREQYMKLPQGEKVQVTYVWIDGTGEGVRCKTRTLDQEPKTIDEIPEWNFDGSSTHQAEGSNSDMYLIPVQMFRDPFCLDPNKLVMCEVLKYNRKSAETNLRHTCKKIMEMVNDHRPWFGMEQEYTLLGINGHPYGWPENGFPGPQGPYYCGVGADKVYGRDVVESHYKACLYAGIKICGTNAEVMPSQWEFQVGPCEGIDMGDHLWMARFILHRVCEDFGVVATLDPKPMTGNWNGAGCHTNYSTESMRVEGGLKHIEDAIEKLGKRHDYHICVYDPRGGKDNSRRLTGQHETSSIHEFSAGVANRGASIRIPRQVGQEGYGYFEDRRPAANCDPYAVTEALVRTTILNETGSETKDYKNGAGFSRAIGMASPRDAAVF.

The 81-residue stretch at 26-106 (VQVTYVWIDG…VMCEVLKYNR (81 aa)) folds into the GS beta-grasp domain. Residues 113 to 392 (LRHTCKKIME…MASPRDAAVF (280 aa)) form the GS catalytic domain. Glu134 contacts ATP. Mn(2+) contacts are provided by Glu134, Glu136, Glu196, and Glu203. 203–208 (EFQVGP) serves as a coordination point for ATP. 246-247 (NW) contributes to the L-glutamate binding site. His253 is a Mn(2+) binding site. Residues 255-257 (NYS), Arg319, and Arg324 contribute to the ATP site. L-glutamate is bound at residue Arg319. 336–338 (YFE) is an ADP binding site. Glu338 contacts Mn(2+). Arg340 is a binding site for L-glutamate.

The protein belongs to the glutamine synthetase family. It depends on Mg(2+) as a cofactor. Requires Mn(2+) as cofactor.

It localises to the cytoplasm. The protein localises to the cytosol. It is found in the microsome. The protein resides in the mitochondrion. The enzyme catalyses L-glutamate + NH4(+) + ATP = L-glutamine + ADP + phosphate + H(+). Glutamine synthetase that catalyzes the ATP-dependent conversion of glutamate and ammonia to glutamine. This Xenopus laevis (African clawed frog) protein is Glutamine synthetase.